Reading from the N-terminus, the 64-residue chain is MPKMKTDKGVAKRFKKTANGFKRKQAHLRHILTKKSTKRKRHLRAKCLVSKADVPAIARQLPYA.

It belongs to the bacterial ribosomal protein bL35 family.

In Shewanella baltica (strain OS223), this protein is Large ribosomal subunit protein bL35.